The chain runs to 281 residues: 2,3,4,5-tetrahydropyridine-2,6-dicarboxylate N-succinyltransferase (281 aa).

Residues Arg108 and Asp145 each contribute to the substrate site.

It belongs to the transferase hexapeptide repeat family. As to quaternary structure, homotrimer.

Its subcellular location is the cytoplasm. It carries out the reaction (S)-2,3,4,5-tetrahydrodipicolinate + succinyl-CoA + H2O = (S)-2-succinylamino-6-oxoheptanedioate + CoA. The protein operates within amino-acid biosynthesis; L-lysine biosynthesis via DAP pathway; LL-2,6-diaminopimelate from (S)-tetrahydrodipicolinate (succinylase route): step 1/3. This Parvibaculum lavamentivorans (strain DS-1 / DSM 13023 / NCIMB 13966) protein is 2,3,4,5-tetrahydropyridine-2,6-dicarboxylate N-succinyltransferase.